A 212-amino-acid polypeptide reads, in one-letter code: Orotate phosphoribosyltransferase (212 aa).

5-phospho-alpha-D-ribose 1-diphosphate contacts are provided by residues arginine 95, lysine 99, histidine 101, and 121–129; that span reads DDLITTGGS. Residue threonine 125 participates in orotate binding.

Belongs to the purine/pyrimidine phosphoribosyltransferase family. PyrE subfamily. As to quaternary structure, homodimer. Mg(2+) is required as a cofactor.

The catalysed reaction is orotidine 5'-phosphate + diphosphate = orotate + 5-phospho-alpha-D-ribose 1-diphosphate. It participates in pyrimidine metabolism; UMP biosynthesis via de novo pathway; UMP from orotate: step 1/2. Its function is as follows. Catalyzes the transfer of a ribosyl phosphate group from 5-phosphoribose 1-diphosphate to orotate, leading to the formation of orotidine monophosphate (OMP). This is Orotate phosphoribosyltransferase from Lactobacillus johnsonii (strain CNCM I-12250 / La1 / NCC 533).